We begin with the raw amino-acid sequence, 430 residues long: MEKIIVRGGKQLNGSVKMEGAKNAVLPVIAATLLASKGTSVLKNVPNLSDVFTINEVLKYLNADVSFVNDEVTVDATGEITSDAPFEYVRKMRASIVVMGPLLARTGSARVALPGGCAIGSRPVDLHLKGFEAMGAIVKIENGYIEATAEKLVGAKVYLDFPSVGATQNIMMAATLAEGTTVIENVAREPEIVDLANFLNQMGARVIGAGTEVIRIEGVKELTATEHSIIPDRIEAGTFMIAAAITGGNVLIEDAVPEHISSLIAKLEEMGVQIIEEENGIRVIGPDKLKAVDVKTMPHPGFPTDMQSQMMVIQMLSEGTSIMTETVFENRFMHVEEMRRMNADMKIEGHSVIISGPAKLQGAEVAATDLRAAAALILAGLVADGYTQVTELKYLDRGYNNFHGKLQALGADVERVDDSKIDVTNLASLF.

22 to 23 (KN) contacts phosphoenolpyruvate. Arginine 93 provides a ligand contact to UDP-N-acetyl-alpha-D-glucosamine. The Proton donor role is filled by cysteine 117. Cysteine 117 carries the post-translational modification 2-(S-cysteinyl)pyruvic acid O-phosphothioketal. UDP-N-acetyl-alpha-D-glucosamine-binding positions include 122-126 (RPVDL), aspartate 305, and valine 327.

The protein belongs to the EPSP synthase family. MurA subfamily.

The protein localises to the cytoplasm. It carries out the reaction phosphoenolpyruvate + UDP-N-acetyl-alpha-D-glucosamine = UDP-N-acetyl-3-O-(1-carboxyvinyl)-alpha-D-glucosamine + phosphate. It functions in the pathway cell wall biogenesis; peptidoglycan biosynthesis. In terms of biological role, cell wall formation. Adds enolpyruvyl to UDP-N-acetylglucosamine. This Listeria innocua serovar 6a (strain ATCC BAA-680 / CLIP 11262) protein is UDP-N-acetylglucosamine 1-carboxyvinyltransferase 1.